A 60-amino-acid polypeptide reads, in one-letter code: Large ribosomal subunit protein bL32 (60 aa).

The interval 1 to 60 (MAVQQNKKSPSKRGMHRSHDFLVNPATAIEPNTGETHLRHHISPNGFYRGRKVLKTKADE) is disordered. Basic residues predominate over residues 49–60 (RGRKVLKTKADE).

The protein belongs to the bacterial ribosomal protein bL32 family.

The protein is Large ribosomal subunit protein bL32 of Bordetella bronchiseptica (strain ATCC BAA-588 / NCTC 13252 / RB50) (Alcaligenes bronchisepticus).